The sequence spans 227 residues: Sperm-associated antigen 7 (227 aa).

Positions 1–45 (MADLLGSILSSMEKPPSLGDQESRRKAREQAARLKKLQEQDKQQK) are disordered. Residue Ala2 is modified to N-acetylalanine. Residues 21–45 (QESRRKAREQAARLKKLQEQDKQQK) show a composition bias toward basic and acidic residues. The short motif at 35–51 (KKLQEQDKQQKVEFRKR) is the Nuclear localization signal element. The 64-residue stretch at 46–109 (VEFRKRMEKE…DCRYVMIFKK (64 aa)) folds into the R3H domain. Ser114 carries the phosphoserine modification. A disordered region spans residues 118-161 (LDSYRHGEEWDPQKAEEKRKLKELAQKQEEEAAQQGPAVVSPAS). The span at 119–147 (DSYRHGEEWDPQKAEEKRKLKELAQKQEE) shows a compositional bias: basic and acidic residues. The short motif at 122-139 (RHGEEWDPQKAEEKRKLK) is the Nuclear localization signal element. Phosphoserine is present on residues Ser158 and Ser202.

The protein resides in the nucleus. This Mus musculus (Mouse) protein is Sperm-associated antigen 7 (Spag7).